Consider the following 828-residue polypeptide: MKLSRRSFMKANAVAAAAAAAGLSVPGVARAVVGQQEAIKWDKAPCRFCGTGCGVLVGTQQGRVVACQGDPDAPVNRGLNCIKGYFLPKIMYGKDRLTQPLLRMKNGKYDKEGEFTPITWDQAFDVMEEKFKTALKEKGPESIGMFGSGQWTIWEGYAASKLFKAGFRSNNIDPNARHCMASAVVGFMRTFGMDEPMGCYDDIEQADAFVLWGANMAEMHPILWSRITNSRLSNQNVTVAVLSTYQHRSFELADNGIIFTPQSDLVILNYIANYIIQNNAINQDFFSKHVNLRKGATDIGYGLRPTHPLEKAAKNPGSDASEPMSFEDYKAFVAEYTLEKTAEMTGVPKDQLEQLAQLYADPNKKVISYWTMGFNQHTRGVWANNLVYNLHLLTGKISQPGCGPFSLTGQPSACGTAREVGTFAHRLPADMVVTNEKHRDICEKKWNIPSGTIPAKIGLHAVAQDRALKDGKLNVYWTMCTNNMQAGPNINEERMPGWRDPRNFIIVSDPYPTVSALAADLILPTAMWVEKEGAYGNAERRTQFWRQQVQAPGEAKSDLWQLVQFSRRFKTEEVWPEELLAKKPELRGKTLYEVLYATPEVSKFPVSELAEDQLNDESRELGFYLQKGLFEEYAWFGRGHGHDLAPFDDYHKARGLRWPVVNGKETQWRYSEGNDPYVKAGEGYKFYGKPDGKAVIFALPFEPAAEAPDEEYDLWLSTGRVLEHWHTGSMTRRVPELHRAFPEAVLFIHPLDAKARDLRRGDKVKVVSRRGEVISIVETRGRNRPPQGLVYMPFFDAAQLVNKLTLDATDPLSKETDFKKCAVKLEKV.

Positions 1–31 form a signal peptide, tat-type signal; it reads MKLSRRSFMKANAVAAAAAAAGLSVPGVARA. In terms of domain architecture, 4Fe-4S Mo/W bis-MGD-type spans 39 to 95; that stretch reads IKWDKAPCRFCGTGCGVLVGTQQGRVVACQGDPDAPVNRGLNCIKGYFLPKIMYGKD. Residues cysteine 46, cysteine 49, cysteine 53, and cysteine 81 each coordinate [4Fe-4S] cluster. Mo-bis(molybdopterin guanine dinucleotide) contacts are provided by residues lysine 83, glutamine 150, asparagine 175, cysteine 179, 212-219, 243-247, 262-264, methionine 372, glutamine 376, asparagine 482, 508-509, lysine 531, aspartate 558, and 718-727; these read WGANMAEM, STYQH, QSD, SD, and TGRVLEHWHT. Phenylalanine 794 provides a ligand contact to substrate. Asparagine 802 and lysine 819 together coordinate Mo-bis(molybdopterin guanine dinucleotide).

The protein belongs to the prokaryotic molybdopterin-containing oxidoreductase family. NasA/NapA/NarB subfamily. As to quaternary structure, component of the periplasmic nitrate reductase NapAB complex composed of NapA and NapB. [4Fe-4S] cluster serves as cofactor. The cofactor is Mo-bis(molybdopterin guanine dinucleotide). Post-translationally, predicted to be exported by the Tat system. The position of the signal peptide cleavage has not been experimentally proven.

Its subcellular location is the periplasm. It carries out the reaction 2 Fe(II)-[cytochrome] + nitrate + 2 H(+) = 2 Fe(III)-[cytochrome] + nitrite + H2O. In terms of biological role, catalytic subunit of the periplasmic nitrate reductase complex NapAB. Receives electrons from NapB and catalyzes the reduction of nitrate to nitrite. This is Periplasmic nitrate reductase from Shigella flexneri.